The following is a 239-amino-acid chain: DNA repair protein RecO (239 aa).

It belongs to the RecO family.

Involved in DNA repair and RecF pathway recombination. This chain is DNA repair protein RecO, found in Bifidobacterium longum subsp. infantis (strain ATCC 15697 / DSM 20088 / JCM 1222 / NCTC 11817 / S12).